Reading from the N-terminus, the 274-residue chain is Large ribosomal subunit protein uL2 (274 aa).

2 disordered regions span residues 28–54 and 224–274; these read APHA…TRHI and VAMN…RRRK. Residues 263–274 show a composition bias toward basic and acidic residues; sequence KRTDKMIVRRRK.

The protein belongs to the universal ribosomal protein uL2 family. In terms of assembly, part of the 50S ribosomal subunit. Forms a bridge to the 30S subunit in the 70S ribosome.

Its function is as follows. One of the primary rRNA binding proteins. Required for association of the 30S and 50S subunits to form the 70S ribosome, for tRNA binding and peptide bond formation. It has been suggested to have peptidyltransferase activity; this is somewhat controversial. Makes several contacts with the 16S rRNA in the 70S ribosome. In Pseudomonas syringae pv. tomato (strain ATCC BAA-871 / DC3000), this protein is Large ribosomal subunit protein uL2.